The sequence spans 190 residues: MKLVVGLGNPEPRYAGTRHNVGFDVLDTLAATFQTRFGKGKGNYLSTKISHRNRSVILLKPMTYMNLSGHAVVAAMNFYKVSESGLLIVCDDLNLPAGSIRLRAKGSAGGQNGLKHIIECLGSEGFARLRVGIRPLDRPLHSFSSFVLGKFTEEERIVMEKVIPVCREAALDVVVNGIEHAMNNYNKPII.

A tRNA-binding site is contributed by Tyr-14. The active-site Proton acceptor is His-19. Positions 64, 66, and 112 each coordinate tRNA.

Belongs to the PTH family. In terms of assembly, monomer.

The protein resides in the cytoplasm. The enzyme catalyses an N-acyl-L-alpha-aminoacyl-tRNA + H2O = an N-acyl-L-amino acid + a tRNA + H(+). Its function is as follows. Hydrolyzes ribosome-free peptidyl-tRNAs (with 1 or more amino acids incorporated), which drop off the ribosome during protein synthesis, or as a result of ribosome stalling. In terms of biological role, catalyzes the release of premature peptidyl moieties from peptidyl-tRNA molecules trapped in stalled 50S ribosomal subunits, and thus maintains levels of free tRNAs and 50S ribosomes. In Chlorobium phaeobacteroides (strain DSM 266 / SMG 266 / 2430), this protein is Peptidyl-tRNA hydrolase.